Reading from the N-terminus, the 123-residue chain is Large ribosomal subunit protein bL12 (123 aa).

The protein belongs to the bacterial ribosomal protein bL12 family. As to quaternary structure, homodimer. Part of the ribosomal stalk of the 50S ribosomal subunit. Forms a multimeric L10(L12)X complex, where L10 forms an elongated spine to which 2 to 4 L12 dimers bind in a sequential fashion. Binds GTP-bound translation factors.

Forms part of the ribosomal stalk which helps the ribosome interact with GTP-bound translation factors. Is thus essential for accurate translation. This Neisseria gonorrhoeae (strain NCCP11945) protein is Large ribosomal subunit protein bL12.